The chain runs to 271 residues: Rhomboid-type serine protease 2 (271 aa).

Transmembrane regions (helical) follow at residues 16 to 36 (GLAV…NLVY), 64 to 84 (HLSF…IVMF), 89 to 111 (GTLY…YCLI), 115 to 137 (LFPN…YFAV), 152 to 172 (FSFP…LLAP), and 176 to 196 (LPGH…ENWV). Catalysis depends on serine 125, which acts as the Nucleophile. Histidine 179 is a catalytic residue. The interval 252–271 (HNTDTPAEPTFQGNGRVLGN) is disordered.

It belongs to the peptidase S54 family.

It localises to the golgi apparatus membrane. The protein localises to the golgi apparatus. The protein resides in the cis-Golgi network membrane. It carries out the reaction Cleaves type-1 transmembrane domains using a catalytic dyad composed of serine and histidine that are contributed by different transmembrane domains.. Functionally, probable rhomboid-type serine protease that catalyzes intramembrane proteolysis. The chain is Rhomboid-type serine protease 2 (RBD2) from Kluyveromyces lactis (strain ATCC 8585 / CBS 2359 / DSM 70799 / NBRC 1267 / NRRL Y-1140 / WM37) (Yeast).